Reading from the N-terminus, the 134-residue chain is Syncollin (134 aa).

The first 21 residues, 1–21, serve as a signal peptide directing secretion; sequence MSPLRPLLLALALASVPCAQG.

Monomer and homooligomer; most probably hexameric. Interacts with GP2. Post-translationally, contains intrachain disulfide bonds.

The protein localises to the zymogen granule membrane. Its subcellular location is the zymogen granule lumen. Functionally, functions in exocytosis in pancreatic acinar cells regulating the fusion of zymogen granules with each other. May have a pore-forming activity on membranes and regulate exocytosis in other exocrine tissues. This chain is Syncollin (SYCN), found in Homo sapiens (Human).